The following is a 371-amino-acid chain: Cytochrome b (371 aa).

The next 4 helical transmembrane spans lie at 25–45 (FGSM…FLAV), 69–90 (WMMQ…YIHI), 105–125 (WMSG…GYVL), and 170–190 (FFAL…LHII). H75 and H89 together coordinate heme b. Residues H174 and H188 each contribute to the heme b site. H193 provides a ligand contact to a ubiquinone. 4 helical membrane-spanning segments follow: residues 218–238 (HKDL…VSFS), 280–300 (LGGA…PFTH), 312–332 (LSQL…WAAT), and 339–358 (FIII…LSIP).

Belongs to the cytochrome b family. As to quaternary structure, the cytochrome bc1 complex contains 3 respiratory subunits (MT-CYB, CYC1 and UQCRFS1), 2 core proteins (UQCRC1 and UQCRC2) and probably 6 low-molecular weight proteins. It depends on heme b as a cofactor.

The protein localises to the mitochondrion inner membrane. Functionally, component of the ubiquinol-cytochrome c reductase complex (complex III or cytochrome b-c1 complex) that is part of the mitochondrial respiratory chain. The b-c1 complex mediates electron transfer from ubiquinol to cytochrome c. Contributes to the generation of a proton gradient across the mitochondrial membrane that is then used for ATP synthesis. This Antaresia childreni (Children's python) protein is Cytochrome b (MT-CYB).